Here is a 567-residue protein sequence, read N- to C-terminus: Geranylgeranyl transferase type-2 subunit alpha (567 aa).

PFTA repeat units lie at residues 44 to 78, 88 to 122, 124 to 158, 159 to 193, 207 to 241, and 363 to 397; these read LDES…HLET, LVKA…RLPE, NWAR…QAAV, APAE…QLHP, VLLK…RAEP, and VLQS…ALDP. Serine 98 is modified (phosphoserine). LRR repeat units lie at residues 442 to 463, 464 to 486, 487 to 508, 509 to 530, and 534 to 555; these read DVRV…EQLL, LVTH…AALR, CLEV…ANLP, RLQE…QPLV, and RLVL…QERL.

This sequence belongs to the protein prenyltransferase subunit alpha family. In terms of assembly, heterotrimer composed of RABGGTA, RABGGTB and CHM; within this trimer, RABGGTA and RABGGTB form the catalytic component B, while CHM (component A) mediates peptide substrate binding. The Rab GGTase dimer (RGGT) interacts with CHM (component A) prior to Rab protein binding; the association is stabilized by geranylgeranyl pyrophosphate (GGpp). The CHM:RGGT:Rab complex is destabilized by GGpp. Interacts with non-phosphorylated form of RAB8A; phosphorylation of RAB8A at 'Thr-72' disrupts this interaction. In terms of tissue distribution, most abundant in the heart, brain, spleen and liver. Less in the lung, muscle, kidney and testis; in these tissues less abundant than the beta subunit.

The catalysed reaction is geranylgeranyl diphosphate + L-cysteinyl-[protein] = S-geranylgeranyl-L-cysteinyl-[protein] + diphosphate. With respect to regulation, the enzymatic reaction requires the aid of a Rab escort protein (also called component A), such as CHM. Its function is as follows. Catalyzes the transfer of a geranylgeranyl moiety from geranylgeranyl diphosphate to both cysteines of Rab proteins with the C-terminal sequence -XXCC, -XCXC and -CCXX, such as RAB1A, RAB3A, RAB5A and RAB7A. This Rattus norvegicus (Rat) protein is Geranylgeranyl transferase type-2 subunit alpha (Rabggta).